The sequence spans 140 residues: Nucleoside diphosphate kinase (140 aa).

Residues lysine 11, phenylalanine 59, arginine 87, threonine 93, arginine 104, and asparagine 114 each coordinate ATP. Histidine 117 functions as the Pros-phosphohistidine intermediate in the catalytic mechanism.

Belongs to the NDK family. As to quaternary structure, homotetramer. Mg(2+) is required as a cofactor.

It is found in the cytoplasm. It catalyses the reaction a 2'-deoxyribonucleoside 5'-diphosphate + ATP = a 2'-deoxyribonucleoside 5'-triphosphate + ADP. The enzyme catalyses a ribonucleoside 5'-diphosphate + ATP = a ribonucleoside 5'-triphosphate + ADP. Its function is as follows. Major role in the synthesis of nucleoside triphosphates other than ATP. The ATP gamma phosphate is transferred to the NDP beta phosphate via a ping-pong mechanism, using a phosphorylated active-site intermediate. This chain is Nucleoside diphosphate kinase, found in Gluconacetobacter diazotrophicus (strain ATCC 49037 / DSM 5601 / CCUG 37298 / CIP 103539 / LMG 7603 / PAl5).